Here is a 427-residue protein sequence, read N- to C-terminus: MKLKTKAKALRGRLRVPGDKSISHRAVIFGAIAEGQTVIHGLLRGQDVLATIQAFRDLGVTIYESADSLIIEGRGFKGLKPAQKPLDMGNSGTSMRLLAGLLAAQDFSVQLLGDDSLSRRPMDRITIPLSLMGAELSGQGEKELPPLIVKGCQELRPIHYQLPVASAQVKSAILLAALQTQGETVILEKELTRNHTEEMIEQFGGKLSVAGKQISIKGPQRLQGQTLQIPGDLSSAAFWLAAGLIVPGSDLVLENVGINPTRTGLLEVIEKMGGRISYQAVDKDRQAATLKVSYSTLKGIEISGDLIPRLIDELPVIALLATQAQGTTYIRDAQELRVKETDRIQAVTDVLGQMGADIQATEDGMVTRGKTPLHGAAVSTCGDHRIGMMTAIAALLVEEGQVTLERAEAILTSYPDFFKDLERLWHD.

3-phosphoshikimate contacts are provided by K20, S21, and R25. K20 is a phosphoenolpyruvate binding site. Positions 92 and 120 each coordinate phosphoenolpyruvate. Residues S166, Q168, D312, and K339 each contribute to the 3-phosphoshikimate site. Residue Q168 coordinates phosphoenolpyruvate. Catalysis depends on D312, which acts as the Proton acceptor. R343 and R385 together coordinate phosphoenolpyruvate.

The protein belongs to the EPSP synthase family. Monomer.

The protein localises to the cytoplasm. It catalyses the reaction 3-phosphoshikimate + phosphoenolpyruvate = 5-O-(1-carboxyvinyl)-3-phosphoshikimate + phosphate. The protein operates within metabolic intermediate biosynthesis; chorismate biosynthesis; chorismate from D-erythrose 4-phosphate and phosphoenolpyruvate: step 6/7. Its function is as follows. Catalyzes the transfer of the enolpyruvyl moiety of phosphoenolpyruvate (PEP) to the 5-hydroxyl of shikimate-3-phosphate (S3P) to produce enolpyruvyl shikimate-3-phosphate and inorganic phosphate. The sequence is that of 3-phosphoshikimate 1-carboxyvinyltransferase from Streptococcus equi subsp. equi (strain 4047).